The sequence spans 169 residues: Cell division inhibitor SulA (169 aa).

The tract at residues 106-112 (ALRTGNY) is ftsZ binding. Residues 162 to 169 (KIHSNLYH) form a lon protease binding region.

The protein belongs to the SulA family. In terms of assembly, interacts with FtsZ. In terms of processing, is rapidly cleaved and degraded by the Lon protease once DNA damage is repaired.

Component of the SOS system and an inhibitor of cell division. Accumulation of SulA causes rapid cessation of cell division and the appearance of long, non-septate filaments. In the presence of GTP, binds a polymerization-competent form of FtsZ in a 1:1 ratio, thus inhibiting FtsZ polymerization and therefore preventing it from participating in the assembly of the Z ring. This mechanism prevents the premature segregation of damaged DNA to daughter cells during cell division. The polypeptide is Cell division inhibitor SulA (Salmonella gallinarum (strain 287/91 / NCTC 13346)).